The following is a 65-amino-acid chain: DNA gyrase inhibitor YacG (65 aa).

Zn(2+) contacts are provided by cysteine 9, cysteine 12, cysteine 28, and cysteine 32. Residues 44–65 (EKRIPSSSDLSESDDWSEEPKQ) are disordered. The segment covering 54–65 (SESDDWSEEPKQ) has biased composition (acidic residues).

It belongs to the DNA gyrase inhibitor YacG family. In terms of assembly, interacts with GyrB. Zn(2+) serves as cofactor.

Its function is as follows. Inhibits all the catalytic activities of DNA gyrase by preventing its interaction with DNA. Acts by binding directly to the C-terminal domain of GyrB, which probably disrupts DNA binding by the gyrase. This is DNA gyrase inhibitor YacG from Escherichia coli O6:H1 (strain CFT073 / ATCC 700928 / UPEC).